The sequence spans 145 residues: Alpha-amylase/trypsin inhibitor CM2 (145 aa).

A signal peptide spans 1–25; sequence MASKSSITHLLLAAVLVSVFAAAAA.

Belongs to the protease inhibitor I6 (cereal trypsin/alpha-amylase inhibitor) family. In terms of tissue distribution, developing endosperm.

The protein resides in the secreted. Its function is as follows. Alpha-amylase/trypsin inhibitor. It could be involved in insect defense mechanisms. This Triticum aestivum (Wheat) protein is Alpha-amylase/trypsin inhibitor CM2.